Reading from the N-terminus, the 293-residue chain is uncharacterized protein (293 aa).

2 disordered regions span residues 121–154 (NLNF…SQNS) and 254–274 (DILQ…PQQQ). The segment covering 133 to 149 (SYHHHSHSHSHHSHSHS) has biased composition (basic residues). The segment covering 260–272 (PPSPTPTPPPPPQ) has biased composition (pro residues).

This is an uncharacterized protein from Dictyostelium discoideum (Social amoeba).